The primary structure comprises 336 residues: DNA-directed RNA polymerase subunit alpha (336 aa).

The interval 1 to 238 (MNDLDLNLVP…NLFLPFLQAE (238 aa)) is alpha N-terminal domain (alpha-NTD). Residues 267-336 (AKKVTFQHIF…LQKRFGMRLQ (70 aa)) are alpha C-terminal domain (alpha-CTD).

It belongs to the RNA polymerase alpha chain family. In plastids the minimal PEP RNA polymerase catalytic core is composed of four subunits: alpha, beta, beta', and beta''. When a (nuclear-encoded) sigma factor is associated with the core the holoenzyme is formed, which can initiate transcription.

It is found in the plastid. The protein localises to the chloroplast. It carries out the reaction RNA(n) + a ribonucleoside 5'-triphosphate = RNA(n+1) + diphosphate. Functionally, DNA-dependent RNA polymerase catalyzes the transcription of DNA into RNA using the four ribonucleoside triphosphates as substrates. This is DNA-directed RNA polymerase subunit alpha from Huperzia lucidula (Shining clubmoss).